The chain runs to 313 residues: Ribosomal RNA small subunit methyltransferase H (313 aa).

S-adenosyl-L-methionine contacts are provided by residues 34 to 36 (GGH), Asp-53, Phe-80, Asp-101, and Gln-108.

It belongs to the methyltransferase superfamily. RsmH family.

The protein localises to the cytoplasm. It catalyses the reaction cytidine(1402) in 16S rRNA + S-adenosyl-L-methionine = N(4)-methylcytidine(1402) in 16S rRNA + S-adenosyl-L-homocysteine + H(+). Its function is as follows. Specifically methylates the N4 position of cytidine in position 1402 (C1402) of 16S rRNA. This is Ribosomal RNA small subunit methyltransferase H from Lacticaseibacillus casei (strain BL23) (Lactobacillus casei).